The following is a 668-amino-acid chain: DNA ligase (668 aa).

NAD(+) contacts are provided by residues 31–35, 80–81, and Glu-112; these read DAEYD and SL. The N6-AMP-lysine intermediate role is filled by Lys-114. 4 residues coordinate NAD(+): Arg-135, Glu-172, Lys-289, and Lys-313. Residues Cys-407, Cys-410, Cys-425, and Cys-431 each contribute to the Zn(2+) site. Residues 591-668 enclose the BRCT domain; sequence SVPQPLAGKV…NEEQLIELLN (78 aa).

Belongs to the NAD-dependent DNA ligase family. LigA subfamily. Mg(2+) serves as cofactor. The cofactor is Mn(2+).

The enzyme catalyses NAD(+) + (deoxyribonucleotide)n-3'-hydroxyl + 5'-phospho-(deoxyribonucleotide)m = (deoxyribonucleotide)n+m + AMP + beta-nicotinamide D-nucleotide.. In terms of biological role, DNA ligase that catalyzes the formation of phosphodiester linkages between 5'-phosphoryl and 3'-hydroxyl groups in double-stranded DNA using NAD as a coenzyme and as the energy source for the reaction. It is essential for DNA replication and repair of damaged DNA. This chain is DNA ligase, found in Aliivibrio fischeri (strain ATCC 700601 / ES114) (Vibrio fischeri).